The following is a 49-amino-acid chain: Delta-actitoxin-Axm1b (49 aa).

The tract at residues 1-7 (GVPCLCD) is well-structured region. 3 disulfide bridges follow: cysteine 4-cysteine 46, cysteine 6-cysteine 36, and cysteine 29-cysteine 47. The arg-14 loop (non-well-structured region) stretch occupies residues 8 to 17 (SDGPRPRGNT). The well-structured region stretch occupies residues 18–49 (LSGILWFYPSGCPSGWHNCKAHGPNIGWCCKK).

It belongs to the sea anemone sodium channel inhibitory toxin family. Type I subfamily.

It localises to the secreted. It is found in the nematocyst. Its function is as follows. Binds specifically to voltage-gated sodium channels (Nav) (site 3), thereby delaying their inactivation. This toxin has the highest affinity of all anemone toxins for the mammalian sodium channel, whereas its paralog Anthopleurin-A retains the greatest capacity to discriminate between cardiac (Nav1.5/SCN5A) and neuronal sodium channels. When tested electrophysiologically, this toxin exhibits a high affinity for multiple sodium channels with a 50-fold preference for rat cardiac (Nav1.5/SCN5A) over neuronal channels (0.1 nM versus 5 nM). When tested by ion flux, the affinities are similar and appear to have higher affinity (9 nM versus 22 nM). The residue Lys-37 of this toxin has been shown to interact with channel Nav1.5 (residue Asp-1612 in rat and Asp-1610 in human), which is located in the DIV S3-S4 linker (corresponding to channel site 3). Selectively modifies sodium channel inactivation from the open state with little effect on channel activation or on inactivation from closed states. Does not display phospholipid-binding activities, suggesting that the domain IV S3-S4 linker is located at the extracellular surface and not buried in the phospholipid bilayer. The chain is Delta-actitoxin-Axm1b from Anthopleura xanthogrammica (Giant green sea anemone).